A 322-amino-acid chain; its full sequence is Phosphatidylserine decarboxylase proenzyme (322 aa).

Residues Asp90, His147, and Ser254 each act as charge relay system; for autoendoproteolytic cleavage activity in the active site. The active-site Schiff-base intermediate with substrate; via pyruvic acid; for decarboxylase activity is Ser254. Ser254 is subject to Pyruvic acid (Ser); by autocatalysis.

Belongs to the phosphatidylserine decarboxylase family. PSD-B subfamily. Prokaryotic type I sub-subfamily. In terms of assembly, heterodimer of a large membrane-associated beta subunit and a small pyruvoyl-containing alpha subunit. Requires pyruvate as cofactor. Post-translationally, is synthesized initially as an inactive proenzyme. Formation of the active enzyme involves a self-maturation process in which the active site pyruvoyl group is generated from an internal serine residue via an autocatalytic post-translational modification. Two non-identical subunits are generated from the proenzyme in this reaction, and the pyruvate is formed at the N-terminus of the alpha chain, which is derived from the carboxyl end of the proenzyme. The autoendoproteolytic cleavage occurs by a canonical serine protease mechanism, in which the side chain hydroxyl group of the serine supplies its oxygen atom to form the C-terminus of the beta chain, while the remainder of the serine residue undergoes an oxidative deamination to produce ammonia and the pyruvoyl prosthetic group on the alpha chain. During this reaction, the Ser that is part of the protease active site of the proenzyme becomes the pyruvoyl prosthetic group, which constitutes an essential element of the active site of the mature decarboxylase.

The protein localises to the cell membrane. It catalyses the reaction a 1,2-diacyl-sn-glycero-3-phospho-L-serine + H(+) = a 1,2-diacyl-sn-glycero-3-phosphoethanolamine + CO2. It participates in phospholipid metabolism; phosphatidylethanolamine biosynthesis; phosphatidylethanolamine from CDP-diacylglycerol: step 2/2. Catalyzes the formation of phosphatidylethanolamine (PtdEtn) from phosphatidylserine (PtdSer). The chain is Phosphatidylserine decarboxylase proenzyme from Shigella dysenteriae serotype 1 (strain Sd197).